The sequence spans 827 residues: Leucine--tRNA ligase (827 aa).

Residues 42–52 carry the 'HIGH' region motif; that stretch reads PYPSGKLHMGH. The short motif at 583-587 is the 'KMSKS' region element; sequence KMSKS. Lys-586 lines the ATP pocket.

The protein belongs to the class-I aminoacyl-tRNA synthetase family.

It is found in the cytoplasm. The catalysed reaction is tRNA(Leu) + L-leucine + ATP = L-leucyl-tRNA(Leu) + AMP + diphosphate. This Pelotomaculum thermopropionicum (strain DSM 13744 / JCM 10971 / SI) protein is Leucine--tRNA ligase.